The following is a 206-amino-acid chain: Ribosomal RNA small subunit methyltransferase G (206 aa).

Residues Gly-73, Leu-78, 124-125 (VE), and Arg-139 contribute to the S-adenosyl-L-methionine site.

The protein belongs to the methyltransferase superfamily. RNA methyltransferase RsmG family.

The protein localises to the cytoplasm. It carries out the reaction guanosine(527) in 16S rRNA + S-adenosyl-L-methionine = N(7)-methylguanosine(527) in 16S rRNA + S-adenosyl-L-homocysteine. Functionally, specifically methylates the N7 position of guanine in position 527 of 16S rRNA. The chain is Ribosomal RNA small subunit methyltransferase G from Pectobacterium carotovorum subsp. carotovorum (strain PC1).